Here is a 209-residue protein sequence, read N- to C-terminus: Small ribosomal subunit protein uS4 (209 aa).

Residues 99–164 (TRLDNVVYRM…IPRVQELKEL (66 aa)) form the S4 RNA-binding domain.

The protein belongs to the universal ribosomal protein uS4 family. Part of the 30S ribosomal subunit. Contacts protein S5. The interaction surface between S4 and S5 is involved in control of translational fidelity.

In terms of biological role, one of the primary rRNA binding proteins, it binds directly to 16S rRNA where it nucleates assembly of the body of the 30S subunit. Functionally, with S5 and S12 plays an important role in translational accuracy. In Natranaerobius thermophilus (strain ATCC BAA-1301 / DSM 18059 / JW/NM-WN-LF), this protein is Small ribosomal subunit protein uS4.